A 351-amino-acid polypeptide reads, in one-letter code: Peptidyl-Lys metalloendopeptidase (351 aa).

The signal sequence occupies residues M1 to A22. Residues A23–R183 constitute a propeptide that is removed on maturation. Disulfide bonds link C189/C259 and C261/C281. H301 provides a ligand contact to Zn(2+). E302 is a catalytic residue. 2 residues coordinate Zn(2+): H305 and D314.

This sequence belongs to the peptidase M35 family. It depends on Zn(2+) as a cofactor.

The protein resides in the secreted. The catalysed reaction is Preferential cleavage in proteins: -Xaa-|-Lys- (in which Xaa may be Pro).. Its activity is regulated as follows. Inhibited by chelating agents such as imidazole, alpha,alpha'-bipyridine, and 1,10-phenanthroline. The polypeptide is Peptidyl-Lys metalloendopeptidase (MEP) (Armillaria mellea (Honey mushroom)).